A 196-amino-acid chain; its full sequence is Holliday junction branch migration complex subunit RuvA (196 aa).

The segment at 1-63 (MYDYIKGKLS…DDAHLLFGFH (63 aa)) is domain I. The interval 64–142 (TENEKEIFLN…EASGESATSR (79 aa)) is domain II. The interval 143–148 (KVSSEQ) is flexible linker. A domain III region spans residues 148-196 (QNSNLEEAMEALLALGYKATELKKVKAFFEGTNETVEQYIKSSLKMLMK).

Belongs to the RuvA family. Homotetramer. Forms an RuvA(8)-RuvB(12)-Holliday junction (HJ) complex. HJ DNA is sandwiched between 2 RuvA tetramers; dsDNA enters through RuvA and exits via RuvB. An RuvB hexamer assembles on each DNA strand where it exits the tetramer. Each RuvB hexamer is contacted by two RuvA subunits (via domain III) on 2 adjacent RuvB subunits; this complex drives branch migration. In the full resolvosome a probable DNA-RuvA(4)-RuvB(12)-RuvC(2) complex forms which resolves the HJ.

It is found in the cytoplasm. Its function is as follows. The RuvA-RuvB-RuvC complex processes Holliday junction (HJ) DNA during genetic recombination and DNA repair, while the RuvA-RuvB complex plays an important role in the rescue of blocked DNA replication forks via replication fork reversal (RFR). RuvA specifically binds to HJ cruciform DNA, conferring on it an open structure. The RuvB hexamer acts as an ATP-dependent pump, pulling dsDNA into and through the RuvAB complex. HJ branch migration allows RuvC to scan DNA until it finds its consensus sequence, where it cleaves and resolves the cruciform DNA. The sequence is that of Holliday junction branch migration complex subunit RuvA from Streptococcus agalactiae serotype Ia (strain ATCC 27591 / A909 / CDC SS700).